A 216-amino-acid polypeptide reads, in one-letter code: UPF0502 protein Ent638_1581 (216 aa).

It belongs to the UPF0502 family.

The protein is UPF0502 protein Ent638_1581 of Enterobacter sp. (strain 638).